The chain runs to 136 residues: Protein NrdI (136 aa).

It belongs to the NrdI family.

Its function is as follows. Probably involved in ribonucleotide reductase function. This is Protein NrdI from Escherichia coli (strain 55989 / EAEC).